The chain runs to 248 residues: PF03932 family protein CutC (248 aa).

It belongs to the CutC family. In terms of assembly, homodimer.

The protein resides in the cytoplasm. This Salmonella paratyphi A (strain AKU_12601) protein is PF03932 family protein CutC.